A 429-amino-acid chain; its full sequence is Ribonuclease E/G-like protein (429 aa).

The Mg(2+) site is built by Asp-290 and Asp-332.

Belongs to the RNase E/G family. Mg(2+) serves as cofactor.

The protein localises to the plastid. The protein resides in the chloroplast stroma. Its function is as follows. Involved in intercistronic processing of primary transcripts from chloroplast operons. The endonucleolytic activity of the enzyme depends on the number of phosphates at the 5' end, is inhibited by structured RNA, and preferentially cleaves A/U-rich sequences. This is Ribonuclease E/G-like protein (rne) from Guillardia theta (Cryptophyte).